The following is a 77-amino-acid chain: Exodeoxyribonuclease 7 small subunit (77 aa).

This sequence belongs to the XseB family. In terms of assembly, heterooligomer composed of large and small subunits.

The protein resides in the cytoplasm. It carries out the reaction Exonucleolytic cleavage in either 5'- to 3'- or 3'- to 5'-direction to yield nucleoside 5'-phosphates.. Bidirectionally degrades single-stranded DNA into large acid-insoluble oligonucleotides, which are then degraded further into small acid-soluble oligonucleotides. This Carboxydothermus hydrogenoformans (strain ATCC BAA-161 / DSM 6008 / Z-2901) protein is Exodeoxyribonuclease 7 small subunit.